We begin with the raw amino-acid sequence, 267 residues long: Ribosyldihydronicotinamide dehydrogenase-like protein traD (267 aa).

Residues His-9, 15 to 16 (LN), and 100 to 103 (LWWF) each bind FAD. 122 to 124 (GHG) contributes to the substrate binding site. FAD contacts are provided by residues 152–155 (TLGG) and Tyr-160.

Belongs to the NAD(P)H dehydrogenase (quinone) family. As to quaternary structure, homodimer. Requires FAD as cofactor.

Its pathway is secondary metabolite biosynthesis. In terms of biological role, ribosyldihydronicotinamide dehydrogenase-like protein; part of the tra gene cluster that produces terrestric acid. The clavatol biosynthesis cluster cla and the terrestric acid cluster tra are both involved in the production of peniphenones and penilactones. The non-reducing PKS claF is responsible for the formation of clavatol from successive condensations of 3 malonyl-CoA units, presumably with a simple acetyl-CoA starter unit, and 2 methylation steps. The esterase claE probably collaborates with claF by catalyzing the hydrolysis of ACP-bound acyl intermediates to free the ACP from stalled intermediates. The clavatol oxidase claD then converts clavatol to hydroxyclavatol. Spontaneous dehydration of hydroxyclavatol leads to the accumulation of the highly active ortho-quinone methide. On the other hand, the PKS-NRPS hybrid traA is involved in the formation of crustosic acid, with the help of traB and traD. The polyketide synthase module (PKS) of traA is responsible for the synthesis of the polyketide backbone via the condensation of an acetyl-CoA starter unit with 3 malonyl-CoA units. The downstream nonribosomal peptide synthetase (NRPS) module then amidates the carboxyl end of the polyketide with L-malic acid. Because traA lacks a designated enoylreductase (ER) domain, the required activity is provided the enoyl reductase traG. Crustosic acid undergoes decarboxylation and isomerization to the terrestric acid, catalyzed by the 2-oxoglutarate-dependent dioxygenase traH. Both acids are further converted to the 2 gamma-butyrolactones (R)-5-methyltetronic acid and (S)-5-carboxylmethyltetronic acid, with involvement of the cytochrome P450 monooxygenase claJ. Spontaneous addition of the methide to these gamma-butyrolactones leads to peniphenone D and penilactone D, which undergo again stereospecific attacking by methide to give penilactones A and B. This Penicillium crustosum (Blue mold fungus) protein is Ribosyldihydronicotinamide dehydrogenase-like protein traD.